Reading from the N-terminus, the 499-residue chain is MSNLIILPMLLPFVCALILVFTKNKNRISKILSITTMIVNTMISIALLIYVVNHKPITLDFGGWKAPFGIQFLGDSLSLLMVSVSSFVVTLIMAYGFGRGEKRVNRFHLPTFILLLTVGVIGSFLTSDLFNLYVMFEIMLLASFVLVTLGQSVEQLRAAIVYVVLNILGSWLLLLGIGMLYKTVGTLNFSHLAMRLNHMENNQTITMISLVFLVAFSSKAALVIFMWLPKAYAVLNTELAALFAALMTKVGAYALIRFFTLLFDHHPSVTHTLLVFMACITMIIGAFGVIAYKDIKKIAAYQVILSIGFIILGLGSHTISGVNGAIFYLANDIIVKTLLFFVIGSLVYMSGYRNYQYLSGLAKREPFFGVAFVVVIFAIGGVPPFSGFPGKVLIFQGAITNGNYIGLALMIVTSLIAMYSLFRVMFIMYFGDADGEQVQFRPLPIYRKGLLSVLVVVVLAMGIAAPVVLKVTEDATNLNMKEDVFQKNVNTHLKEVNHK.

14 helical membrane passes run methionine 1–phenylalanine 21, isoleucine 31–valine 51, leucine 77–phenylalanine 97, phenylalanine 107–serine 127, leucine 129–leucine 149, isoleucine 160–leucine 180, isoleucine 208–leucine 228, leucine 239–phenylalanine 259, threonine 272–tyrosine 292, isoleucine 307–phenylalanine 327, leucine 329–methionine 349, phenylalanine 367–glycine 387, glycine 402–phenylalanine 422, and glycine 449–leucine 469.

The protein belongs to the CPA3 antiporters (TC 2.A.63) subunit D family. In terms of assembly, may form a heterooligomeric complex that consists of seven subunits: mnhA2, mnhB2, mnhC2, mnhD2, mnhE2, mnhF2 and mnhG2.

The protein localises to the cell membrane. This Staphylococcus epidermidis (strain ATCC 35984 / DSM 28319 / BCRC 17069 / CCUG 31568 / BM 3577 / RP62A) protein is Putative antiporter subunit mnhD2 (mnhD2).